The chain runs to 195 residues: MNLSEDVLKGIETLSDEKLINDSVFKHIIDTCFLVILKKKTESDLFDNKAVSSVDTIALKQTFSAFIVFILESMKINYDQSSISDLLEEHKLSSSRIDFISNYFKEYRVAIRKHLSVTNFHFPHIIDVNWRLDLFMKSNAVEKLNTPVYLINLTTEQEENVKGKVQFAATLDQLQDLVFKLRDAQKQIERSSIKS.

Residues 124-192 (HIIDVNWRLD…DAQKQIERSS (69 aa)) enclose the COMM domain.

The protein belongs to the COMM domain-containing protein 3 family. As to quaternary structure, component of the commander complex consisting of the CCC subcomplex and the retriever subcomplex. Component of the CCC subcomplex.

In terms of biological role, scaffold protein in the commander complex that is essential for endosomal recycling of transmembrane cargos; the commander complex is composed of the CCC subcomplex and the retriever subcomplex. This is COMM domain-containing protein 3 (commd3) from Dictyostelium discoideum (Social amoeba).